Consider the following 433-residue polypeptide: Histidine--tRNA ligase (433 aa).

This sequence belongs to the class-II aminoacyl-tRNA synthetase family. In terms of assembly, homodimer.

It localises to the cytoplasm. It carries out the reaction tRNA(His) + L-histidine + ATP = L-histidyl-tRNA(His) + AMP + diphosphate + H(+). The polypeptide is Histidine--tRNA ligase (Azoarcus sp. (strain BH72)).